Consider the following 80-residue polypeptide: Putative UPF0377 protein YMR324C (80 aa).

A helical transmembrane segment spans residues 13–33 (ACIFIDSVCEGIVFWGLCLFV).

It belongs to the UPF0377 family.

It is found in the membrane. The protein is Putative UPF0377 protein YMR324C of Saccharomyces cerevisiae (strain ATCC 204508 / S288c) (Baker's yeast).